Here is a 58-residue protein sequence, read N- to C-terminus: Metallothionein (58 aa).

Residues 1–29 (MPDPCCIDKCECKEGGCKAGCKCTSCRCT) are beta. A divalent metal cation contacts are provided by Cys5, Cys6, Cys10, Cys12, Cys17, Cys21, Cys23, Cys26, Cys28, Cys31, Cys34, Cys38, Cys40, Cys46, Cys50, Cys54, Cys56, and Cys57. An alpha region spans residues 30–58 (PCEKCSSGCKCTTKEDCCKTCTKPCSCCP).

The protein belongs to the metallothionein superfamily. Type 3 family.

Its function is as follows. Metallothioneins have a high content of cysteine residues that bind various heavy metals. Class I MTS in marine crustacea are involved in the sequestration of elevated levels of heavy-metal ions. In Carcinus maenas (Common shore crab), this protein is Metallothionein.